The primary structure comprises 367 residues: Mitochondrial GTPase 1 (367 aa).

In terms of domain architecture, CP-type G spans 42-228; that stretch reads LKTFEKLLPQ…LIDTPGIGVP (187 aa). GTP is bound by residues 89 to 92, 160 to 165, and Gly-224; these read TRKD and NVGKST.

The protein belongs to the TRAFAC class YlqF/YawG GTPase family. MTG1 subfamily.

The protein localises to the mitochondrion inner membrane. Its function is as follows. Mitochondrial GTPase involved in assembly of the large ribosomal subunit. Plays a role in expression of the mitochondrial translational machinery. The chain is Mitochondrial GTPase 1 (MTG1) from Saccharomyces cerevisiae (strain ATCC 204508 / S288c) (Baker's yeast).